Consider the following 228-residue polypeptide: Triosephosphate isomerase (228 aa).

9-11 (NFK) provides a ligand contact to substrate. The active-site Electrophile is the His93. The Proton acceptor role is filled by Glu141. Substrate is bound by residues Ile146, Gly180, and 201 to 202 (AS).

This sequence belongs to the triosephosphate isomerase family. In terms of assembly, homotetramer; dimer of dimers.

The protein localises to the cytoplasm. It carries out the reaction D-glyceraldehyde 3-phosphate = dihydroxyacetone phosphate. The protein operates within carbohydrate biosynthesis; gluconeogenesis. It functions in the pathway carbohydrate degradation; glycolysis; D-glyceraldehyde 3-phosphate from glycerone phosphate: step 1/1. Its function is as follows. Involved in the gluconeogenesis. Catalyzes stereospecifically the conversion of dihydroxyacetone phosphate (DHAP) to D-glyceraldehyde-3-phosphate (G3P). The polypeptide is Triosephosphate isomerase (Metallosphaera sedula (strain ATCC 51363 / DSM 5348 / JCM 9185 / NBRC 15509 / TH2)).